A 281-amino-acid chain; its full sequence is UDP-N-acetylenolpyruvoylglucosamine reductase (281 aa).

An FAD-binding PCMH-type domain is found at 17–180 (VGGKAKKLII…LSATFKFDNG (164 aa)). Arg159 is a catalytic residue. Ser206 functions as the Proton donor in the catalytic mechanism. The active site involves Glu276.

This sequence belongs to the MurB family. FAD is required as a cofactor.

The protein localises to the cytoplasm. It carries out the reaction UDP-N-acetyl-alpha-D-muramate + NADP(+) = UDP-N-acetyl-3-O-(1-carboxyvinyl)-alpha-D-glucosamine + NADPH + H(+). Its pathway is cell wall biogenesis; peptidoglycan biosynthesis. In terms of biological role, cell wall formation. The polypeptide is UDP-N-acetylenolpyruvoylglucosamine reductase (Fusobacterium nucleatum subsp. nucleatum (strain ATCC 25586 / DSM 15643 / BCRC 10681 / CIP 101130 / JCM 8532 / KCTC 2640 / LMG 13131 / VPI 4355)).